We begin with the raw amino-acid sequence, 314 residues long: Porphobilinogen deaminase (314 aa).

At Cys234 the chain carries S-(dipyrrolylmethanemethyl)cysteine.

The protein belongs to the HMBS family. Monomer. Dipyrromethane is required as a cofactor.

The enzyme catalyses 4 porphobilinogen + H2O = hydroxymethylbilane + 4 NH4(+). It participates in porphyrin-containing compound metabolism; protoporphyrin-IX biosynthesis; coproporphyrinogen-III from 5-aminolevulinate: step 2/4. In terms of biological role, tetrapolymerization of the monopyrrole PBG into the hydroxymethylbilane pre-uroporphyrinogen in several discrete steps. The protein is Porphobilinogen deaminase of Mycobacterium marinum (strain ATCC BAA-535 / M).